Here is a 192-residue protein sequence, read N- to C-terminus: Probable GTP-binding protein EngB (192 aa).

In terms of domain architecture, EngB-type G spans 22–192 (QLPEIVFVGR…LLEQLAIYTG (171 aa)). GTP contacts are provided by residues 30 to 37 (GRSNVGKS), 57 to 61 (GKTQL), 75 to 78 (DLPG), 142 to 145 (TKYD), and 172 to 174 (YSA). Mg(2+)-binding residues include Ser-37 and Thr-59.

The protein belongs to the TRAFAC class TrmE-Era-EngA-EngB-Septin-like GTPase superfamily. EngB GTPase family. It depends on Mg(2+) as a cofactor.

In terms of biological role, necessary for normal cell division and for the maintenance of normal septation. The sequence is that of Probable GTP-binding protein EngB from Chlorobium phaeobacteroides (strain BS1).